The following is a 174-amino-acid chain: Methylated-DNA--protein-cysteine methyltransferase (174 aa).

C144 serves as the catalytic Nucleophile; methyl group acceptor.

It belongs to the MGMT family.

The protein localises to the cytoplasm. It carries out the reaction a 6-O-methyl-2'-deoxyguanosine in DNA + L-cysteinyl-[protein] = S-methyl-L-cysteinyl-[protein] + a 2'-deoxyguanosine in DNA. It catalyses the reaction a 4-O-methyl-thymidine in DNA + L-cysteinyl-[protein] = a thymidine in DNA + S-methyl-L-cysteinyl-[protein]. Functionally, involved in the cellular defense against the biological effects of O6-methylguanine (O6-MeG) and O4-methylthymine (O4-MeT) in DNA. Repairs the methylated nucleobase in DNA by stoichiometrically transferring the methyl group to a cysteine residue in the enzyme. This is a suicide reaction: the enzyme is irreversibly inactivated. This chain is Methylated-DNA--protein-cysteine methyltransferase, found in Pyrococcus furiosus (strain ATCC 43587 / DSM 3638 / JCM 8422 / Vc1).